A 337-amino-acid chain; its full sequence is Anthranilate phosphoribosyltransferase (337 aa).

Residues G81, 84–85 (GD), S89, 91–94 (NVST), 109–117 (KHGNRAATS), and A121 each bind 5-phospho-alpha-D-ribose 1-diphosphate. G81 contacts anthranilate. A Mg(2+)-binding site is contributed by S93. N112 lines the anthranilate pocket. R167 serves as a coordination point for anthranilate. 2 residues coordinate Mg(2+): D226 and E227.

This sequence belongs to the anthranilate phosphoribosyltransferase family. In terms of assembly, homodimer. The cofactor is Mg(2+).

It carries out the reaction N-(5-phospho-beta-D-ribosyl)anthranilate + diphosphate = 5-phospho-alpha-D-ribose 1-diphosphate + anthranilate. The protein operates within amino-acid biosynthesis; L-tryptophan biosynthesis; L-tryptophan from chorismate: step 2/5. Its function is as follows. Catalyzes the transfer of the phosphoribosyl group of 5-phosphorylribose-1-pyrophosphate (PRPP) to anthranilate to yield N-(5'-phosphoribosyl)-anthranilate (PRA). This is Anthranilate phosphoribosyltransferase from Methylorubrum extorquens (strain PA1) (Methylobacterium extorquens).